A 156-amino-acid polypeptide reads, in one-letter code: Cyanate hydratase (156 aa).

Residues R96, E99, and S122 contribute to the active site.

The protein belongs to the cyanase family.

The enzyme catalyses cyanate + hydrogencarbonate + 3 H(+) = NH4(+) + 2 CO2. In terms of biological role, catalyzes the reaction of cyanate with bicarbonate to produce ammonia and carbon dioxide. This chain is Cyanate hydratase, found in Escherichia coli O9:H4 (strain HS).